The following is a 473-amino-acid chain: Probable acid phosphatase DDB_G0284755 (473 aa).

The active-site Nucleophile is histidine 94. Residue aspartate 359 is the Proton donor of the active site.

Belongs to the histidine acid phosphatase family.

The catalysed reaction is a phosphate monoester + H2O = an alcohol + phosphate. This is Probable acid phosphatase DDB_G0284755 from Dictyostelium discoideum (Social amoeba).